Reading from the N-terminus, the 365-residue chain is tRNA-specific 2-thiouridylase MnmA (365 aa).

Residues 14–21 and Leu-40 each bind ATP; that span reads AMSGGVDS. Cys-108 (nucleophile) is an active-site residue. Cys-108 and Cys-204 are oxidised to a cystine. An ATP-binding site is contributed by Gly-132. The tract at residues 154 to 156 is interaction with tRNA; the sequence is KDQ. Cys-204 serves as the catalytic Cysteine persulfide intermediate.

Belongs to the MnmA/TRMU family.

Its subcellular location is the cytoplasm. It carries out the reaction S-sulfanyl-L-cysteinyl-[protein] + uridine(34) in tRNA + AH2 + ATP = 2-thiouridine(34) in tRNA + L-cysteinyl-[protein] + A + AMP + diphosphate + H(+). Catalyzes the 2-thiolation of uridine at the wobble position (U34) of tRNA, leading to the formation of s(2)U34. The polypeptide is tRNA-specific 2-thiouridylase MnmA (Rickettsia africae (strain ESF-5)).